A 79-amino-acid chain; its full sequence is Cell division protein ZapB (79 aa).

The stretch at 3–79 (LEVFEKLEAK…QALLGRMEEV (77 aa)) forms a coiled coil. Over residues 36–45 (SLTQEVQSAQ) the composition is skewed to polar residues. Residues 36–63 (SLTQEVQSAQHQREELERENNSLKEQQS) are disordered. Residues 46–57 (HQREELERENNS) are compositionally biased toward basic and acidic residues.

It belongs to the ZapB family. In terms of assembly, homodimer. The ends of the coiled-coil dimer bind to each other, forming polymers. Interacts with FtsZ.

The protein resides in the cytoplasm. Its function is as follows. Non-essential, abundant cell division factor that is required for proper Z-ring formation. It is recruited early to the divisome by direct interaction with FtsZ, stimulating Z-ring assembly and thereby promoting cell division earlier in the cell cycle. Its recruitment to the Z-ring requires functional FtsA or ZipA. The polypeptide is Cell division protein ZapB (Salmonella agona (strain SL483)).